The sequence spans 293 residues: Acetylglutamate kinase (293 aa).

Residues 70–71, Arg92, and Asn186 contribute to the substrate site; that span reads GG.

It belongs to the acetylglutamate kinase family. ArgB subfamily.

It localises to the cytoplasm. It carries out the reaction N-acetyl-L-glutamate + ATP = N-acetyl-L-glutamyl 5-phosphate + ADP. The protein operates within amino-acid biosynthesis; L-arginine biosynthesis; N(2)-acetyl-L-ornithine from L-glutamate: step 2/4. Functionally, catalyzes the ATP-dependent phosphorylation of N-acetyl-L-glutamate. The sequence is that of Acetylglutamate kinase from Parasynechococcus marenigrum (strain WH8102).